Reading from the N-terminus, the 608-residue chain is Developmental regulatory protein wetA (608 aa).

Disordered stretches follow at residues 54–88 (ADHH…GVST), 102–125 (VDAT…VDPR), 146–186 (VSMS…MTRK), 202–226 (SKLR…NPPR), 309–352 (WPHQ…HAVP), 447–544 (AQTY…GDIG), and 556–576 (LMTG…EREA). Composition is skewed to low complexity over residues 77-88 (ESTASASSGVST), 107-119 (PSQP…PGAS), and 163-175 (SSPG…SQPS). The span at 313-338 (QHPHPHPHPHHPQAHTHPHPHPHPHP) shows a compositional bias: basic residues. Composition is skewed to low complexity over residues 339–350 (HQQAVAGHPQHA) and 502–517 (SSNG…SGRG).

Belongs to the wetA family.

In terms of biological role, abaA and wetA are pivotal regulators of conidiophore development and conidium maturation. They act individually and together to regulate their own expression and that of numerous other sporulation-specific genes. Functions to maintain conidial dormancy by suppressing microcycle conidiation. This is Developmental regulatory protein wetA from Gibberella zeae (strain ATCC MYA-4620 / CBS 123657 / FGSC 9075 / NRRL 31084 / PH-1) (Wheat head blight fungus).